A 228-amino-acid polypeptide reads, in one-letter code: Probable septum site-determining protein MinC (228 aa).

It belongs to the MinC family. Interacts with MinD and FtsZ.

In terms of biological role, cell division inhibitor that blocks the formation of polar Z ring septums. Rapidly oscillates between the poles of the cell to destabilize FtsZ filaments that have formed before they mature into polar Z rings. Prevents FtsZ polymerization. The chain is Probable septum site-determining protein MinC from Yersinia pseudotuberculosis serotype O:1b (strain IP 31758).